Consider the following 132-residue polypeptide: MQLSDPLGDLLTRIRNAQRSRHATCVSPASKLRANVLEALKREGYIRGYTSEELRPGISQLRVELKYNDGEPVIKEITRVSKPGRRVYSKIKELPRVYAGLGVSILSTPRGVLSDNEARAANVGGEVLCRVF.

This sequence belongs to the universal ribosomal protein uS8 family. As to quaternary structure, part of the 30S ribosomal subunit. Contacts proteins S5 and S12.

Its function is as follows. One of the primary rRNA binding proteins, it binds directly to 16S rRNA central domain where it helps coordinate assembly of the platform of the 30S subunit. The chain is Small ribosomal subunit protein uS8 from Granulibacter bethesdensis (strain ATCC BAA-1260 / CGDNIH1).